The chain runs to 86 residues: YcgL domain-containing protein XAC4085 (86 aa).

A YcgL domain is found at 1–83 (MHAYVYKSQR…PKTIVLAGEC (83 aa)).

The chain is YcgL domain-containing protein XAC4085 from Xanthomonas axonopodis pv. citri (strain 306).